The sequence spans 494 residues: Alpha-amylase-related protein (494 aa).

Positions 1–20 are cleaved as a signal peptide; sequence MIKFALALTLCLAGASLSLA. Position 21 is a pyrrolidone carboxylic acid (glutamine 21). A disulfide bridge connects residues cysteine 48 and cysteine 104. Residues asparagine 118, glutamine 169, and aspartate 178 each contribute to the Ca(2+) site. Residues cysteine 157 and cysteine 171 are joined by a disulfide bond. Arginine 206 is a chloride binding site. Residue aspartate 208 is the Nucleophile of the active site. Histidine 212 is a binding site for Ca(2+). The active-site Proton donor is the glutamate 245. Residues asparagine 308 and arginine 343 each coordinate chloride. 3 disulfide bridges follow: cysteine 376-cysteine 382, cysteine 418-cysteine 441, and cysteine 448-cysteine 460.

This sequence belongs to the glycosyl hydrolase 13 family. As to quaternary structure, monomer. It depends on Ca(2+) as a cofactor. The cofactor is chloride.

Its subcellular location is the secreted. The catalysed reaction is Endohydrolysis of (1-&gt;4)-alpha-D-glucosidic linkages in polysaccharides containing three or more (1-&gt;4)-alpha-linked D-glucose units.. The protein is Alpha-amylase-related protein (Amyrel) of Drosophila auraria (Fruit fly).